We begin with the raw amino-acid sequence, 267 residues long: Hydroxyethylthiazole kinase (267 aa).

Met46 is a binding site for substrate. ATP is bound by residues Arg122 and Thr168. Gly195 is a substrate binding site.

Belongs to the Thz kinase family. It depends on Mg(2+) as a cofactor.

The enzyme catalyses 5-(2-hydroxyethyl)-4-methylthiazole + ATP = 4-methyl-5-(2-phosphooxyethyl)-thiazole + ADP + H(+). It functions in the pathway cofactor biosynthesis; thiamine diphosphate biosynthesis; 4-methyl-5-(2-phosphoethyl)-thiazole from 5-(2-hydroxyethyl)-4-methylthiazole: step 1/1. In terms of biological role, catalyzes the phosphorylation of the hydroxyl group of 4-methyl-5-beta-hydroxyethylthiazole (THZ). The sequence is that of Hydroxyethylthiazole kinase from Moorella thermoacetica (strain ATCC 39073 / JCM 9320).